A 170-amino-acid polypeptide reads, in one-letter code: RNA pyrophosphohydrolase (170 aa).

The 144-residue stretch at 6–149 (GFRPNVGIVI…KRDVYRRALK (144 aa)) folds into the Nudix hydrolase domain. The Nudix box motif lies at 38–59 (GGIDDGETPEQAMYRELYEEVG).

Belongs to the Nudix hydrolase family. RppH subfamily. It depends on a divalent metal cation as a cofactor.

Its function is as follows. Accelerates the degradation of transcripts by removing pyrophosphate from the 5'-end of triphosphorylated RNA, leading to a more labile monophosphorylated state that can stimulate subsequent ribonuclease cleavage. The chain is RNA pyrophosphohydrolase from Aliivibrio salmonicida (strain LFI1238) (Vibrio salmonicida (strain LFI1238)).